A 336-amino-acid chain; its full sequence is Ornithine carbamoyltransferase, catabolic (336 aa).

Residues 57–60, Q84, R108, and 135–138 each bind carbamoyl phosphate; these read STRT and HPTQ. L-ornithine is bound by residues N169, D233, and 237 to 238; that span reads SM. Residues 275–276 and R322 each bind carbamoyl phosphate; that span reads CL.

This sequence belongs to the aspartate/ornithine carbamoyltransferase superfamily. OTCase family.

It is found in the cytoplasm. The enzyme catalyses carbamoyl phosphate + L-ornithine = L-citrulline + phosphate + H(+). It functions in the pathway amino-acid degradation; L-arginine degradation via ADI pathway; carbamoyl phosphate from L-arginine: step 2/2. Reversibly catalyzes the transfer of the carbamoyl group from carbamoyl phosphate (CP) to the N(epsilon) atom of ornithine (ORN) to produce L-citrulline. In Photobacterium profundum (strain SS9), this protein is Ornithine carbamoyltransferase, catabolic.